We begin with the raw amino-acid sequence, 676 residues long: Periplasmic alpha-amylase (676 aa).

An N-terminal signal peptide occupies residues Met1–Ala17. Cystine bridges form between Cys57–Cys75 and Cys121–Cys537. Ca(2+) is bound at residue Asn314. Asp460 (nucleophile) is an active-site residue. Residue His464 coordinates Ca(2+). The active-site Proton donor is the Glu503.

This sequence belongs to the glycosyl hydrolase 13 family. Monomer. It depends on Ca(2+) as a cofactor.

It localises to the periplasm. The enzyme catalyses Endohydrolysis of (1-&gt;4)-alpha-D-glucosidic linkages in polysaccharides containing three or more (1-&gt;4)-alpha-linked D-glucose units.. In terms of biological role, since only maltooligosaccharides up to a chain length of 6 glucose units are actively transported through the cytoplasmic membrane via the membrane-bound complex of three proteins, MalF, MalG, and MalK, longer maltooligosaccharides must first be degraded by the periplasmic alpha-amylase, the MalS protein. The chain is Periplasmic alpha-amylase (malS) from Escherichia coli (strain K12).